The chain runs to 111 residues: Cornifelin homolog A (111 aa).

The protein belongs to the cornifelin family.

This Xenopus laevis (African clawed frog) protein is Cornifelin homolog A (cnfn-a).